The following is a 1212-amino-acid chain: MVDVNRFKSMQITLASPSKVRSWSYGEVKKPETINYRTLKPEREGLFDEVIFGPTKDWECACGKYKRIRYKGIVCDRCGVEVTRAKVRRERMGHIELKAPVSHIWYFKGIPSRMGLTLDMSPRALEEVIYFAAYVVIDPMDTPLEPKSLLTEREYREKVQEYGYGSFIAKMGAEAIQDLLKRVDLPAEIAELKEELKTATGQKRIKAVRRLDVLDAFNKSGNKPEWMVLNILPVIPPDLRPMVQLDGGRFAASDLNDLYRRVINRNNRLARLLELNAPGIIVQNEKRMLQEAVDALIDNGRRGRPITGPGSRPLKSLSHMLKGKQGRFRQNLLGKRVDFSGRSVIAVGPTLKMYQCGVPREMAIELFKPFVMREIVAKEYAGNVKAAKRMVERGDERIWDILEEVIKEHPVLLNRAPTLHRLGIQAFEPVLIDGKALRLHPLVCEAYNADFDGDQMAIHVPLSEEAQAEARLLMLAAEHILNPKDGKPVVTPSQDMVLGNYYLTMEDAGREGEGMIFKDIDEAVMAYQNGYAHLHSRVGIAVDSMPNKPWKDSQRHKIMVTTVGKILFNAIMPEDLPYLQEPNNANLTEGTPDKYFLEAGQDIQEVIDNLPINVPFKKKNLGNIIAETFKRFRTTETSAFLDRLKDLGYYHSTLAGLTVGIADIPVIDNKAEIIEAAHHRVEDINKAFRRGLMTEDDRYIAVTTTWREAKEALEKRLIETQDPKNPIVMMMDSGARGNISNFSQLAGMRGLMAAPNGRIMELPILSNFREGLSVLEMFFSTHGARKGMTDTALKTADSGYLTRRLVDVAQDVIIREDDCGTDRGLVIRAITDGKEVTETLEERLQGRYTRKSVKHPETGEVLIGADQLISEDMARKIVEAGVEEVTIRSVFTCATRHGVCRHCYGINLATGDAVEVGEAVGTIAAQSIGEPGTQLTMRTFHTGGVASNTDITQGLPRIQEIFEARNPKGEAVITEVKGKVVDIEEDASTRTKKVYVEGKTGNGEYVVPFTARMKVEIGDEVNRGAALTEGSIQPKRLLEVRDTLSVETYLLAEVQKVYRSQGVEIGDKHVEVMVRQMLRKVRVMDPGDTDLLPGTLMDISDFTDANKEIVISGGIPATSRPVLMGITKASLETNSFLSAASFQETTRVLTDAAIRGKKDHLLGLKENVIIGKIIPAGTGMARYRNIEPQAINEVEIIEETEQAEETVVTEAE.

Residues cysteine 60, cysteine 62, cysteine 75, and cysteine 78 each contribute to the Zn(2+) site. The Mg(2+) site is built by aspartate 450, aspartate 452, and aspartate 454. 4 residues coordinate Zn(2+): cysteine 819, cysteine 893, cysteine 900, and cysteine 903.

This sequence belongs to the RNA polymerase beta' chain family. As to quaternary structure, the RNAP catalytic core consists of 2 alpha, 1 beta, 1 beta' and 1 omega subunit. When a sigma factor is associated with the core the holoenzyme is formed, which can initiate transcription. Requires Mg(2+) as cofactor. It depends on Zn(2+) as a cofactor.

The enzyme catalyses RNA(n) + a ribonucleoside 5'-triphosphate = RNA(n+1) + diphosphate. Its function is as follows. DNA-dependent RNA polymerase catalyzes the transcription of DNA into RNA using the four ribonucleoside triphosphates as substrates. The protein is DNA-directed RNA polymerase subunit beta' of Streptococcus uberis (strain ATCC BAA-854 / 0140J).